Here is a 255-residue protein sequence, read N- to C-terminus: Hydroxyacylglutathione hydrolase (255 aa).

7 residues coordinate Zn(2+): H56, H58, D60, H61, H114, D133, and H171.

It belongs to the metallo-beta-lactamase superfamily. Glyoxalase II family. As to quaternary structure, monomer. Zn(2+) is required as a cofactor.

The catalysed reaction is an S-(2-hydroxyacyl)glutathione + H2O = a 2-hydroxy carboxylate + glutathione + H(+). The protein operates within secondary metabolite metabolism; methylglyoxal degradation; (R)-lactate from methylglyoxal: step 2/2. Thiolesterase that catalyzes the hydrolysis of S-D-lactoyl-glutathione to form glutathione and D-lactic acid. This is Hydroxyacylglutathione hydrolase from Roseobacter denitrificans (strain ATCC 33942 / OCh 114) (Erythrobacter sp. (strain OCh 114)).